The primary structure comprises 276 residues: MAHYAIGDIQGCFDELTALLGKIGFNHGTDTLWLTGDIVNRGPKSLETLQFCIRHENSVQIVLGNHDLYLLAVGCGEGALKRSDTIEPILKHPDGGKMLDWLRAQPLLIREGGRVMIHAGILPQWRIAKAESLAGEAEAELRGKKYVKFFSKMYGNKPAAWDEGLEGYARLRFIVNAFTRMRALTFKNELDFDYKSTVKKMPPYLRPWFKAPDRQNLDHTIIFGHWSSLGYTNADNVISLDTGALWGGQLTAVNLETEEITQVQAAGGIDWKSFAK.

This sequence belongs to the Ap4A hydrolase family.

It catalyses the reaction P(1),P(4)-bis(5'-adenosyl) tetraphosphate + H2O = 2 ADP + 2 H(+). In terms of biological role, hydrolyzes diadenosine 5',5'''-P1,P4-tetraphosphate to yield ADP. In Neisseria gonorrhoeae (strain ATCC 700825 / FA 1090), this protein is Bis(5'-nucleosyl)-tetraphosphatase, symmetrical.